The following is a 254-amino-acid chain: 3-deoxy-manno-octulosonate cytidylyltransferase (254 aa).

Belongs to the KdsB family.

The protein localises to the cytoplasm. It carries out the reaction 3-deoxy-alpha-D-manno-oct-2-ulosonate + CTP = CMP-3-deoxy-beta-D-manno-octulosonate + diphosphate. Its pathway is nucleotide-sugar biosynthesis; CMP-3-deoxy-D-manno-octulosonate biosynthesis; CMP-3-deoxy-D-manno-octulosonate from 3-deoxy-D-manno-octulosonate and CTP: step 1/1. It functions in the pathway bacterial outer membrane biogenesis; lipopolysaccharide biosynthesis. In terms of biological role, activates KDO (a required 8-carbon sugar) for incorporation into bacterial lipopolysaccharide in Gram-negative bacteria. The sequence is that of 3-deoxy-manno-octulosonate cytidylyltransferase from Pseudomonas fluorescens (strain ATCC BAA-477 / NRRL B-23932 / Pf-5).